The following is a 377-amino-acid chain: Lactosylceramide 1,3-N-acetyl-beta-D-glucosaminyltransferase B (377 aa).

Residues 1 to 13 (MLISARRLRRCQS) are Cytoplasmic-facing. A helical; Signal-anchor for type II membrane protein membrane pass occupies residues 14-30 (LQLLASCFVLSLMALLV). At 31–377 (QEDNSLVNHV…DTYPCSAAWS (347 aa)) the chain is on the lumenal side. N-linked (GlcNAc...) asparagine glycosylation is found at Asn-56, Asn-167, and Asn-275.

This sequence belongs to the glycosyltransferase 31 family.

Its subcellular location is the golgi apparatus membrane. The catalysed reaction is a beta-D-Gal-(1-&gt;4)-beta-D-Glc-(1&lt;-&gt;1)-Cer(d18:1(4E)) + UDP-N-acetyl-alpha-D-glucosamine = a beta-D-GlcNAc-(1-&gt;3)-beta-D-Gal-(1-&gt;4)-beta-D-Glc-(1&lt;-&gt;1)-Cer(d18:1(4E)) + UDP + H(+). The enzyme catalyses a neolactoside nLc4Cer(d18:1(4E)) + UDP-N-acetyl-alpha-D-glucosamine = a neolactoside IV(3)-beta-GlcNAc-nLc4Cer(d18:1(4E)) + UDP + H(+). It functions in the pathway protein modification; protein glycosylation. Functionally, beta-1,3-N-acetylglucosaminyltransferase that plays a key role in the synthesis of lacto- or neolacto-series carbohydrate chains on glycolipids. The polypeptide is Lactosylceramide 1,3-N-acetyl-beta-D-glucosaminyltransferase B (b3gnt5-b) (Xenopus laevis (African clawed frog)).